The primary structure comprises 317 residues: SWI/SNF-related matrix-associated actin-dependent regulator of chromatin subfamily E member 1-related (317 aa).

The segment covering 1 to 17 (MSHGPKQPGAAAAPAGG) has biased composition (low complexity). The segment at 1–71 (MSHGPKQPGA…RKKILPNGPK (71 aa)) is disordered. A Glycyl lysine isopeptide (Lys-Gly) (interchain with G-Cter in SUMO2) cross-link involves residue Lys31. The segment covering 31–52 (KQERGEGPRAGEKGSHEEEPVK) has biased composition (basic and acidic residues). Positions 53-65 (KRGWPKGKKRKKI) are enriched in basic residues. The segment at residues 70-138 (PKAPVTGYVR…QYMKELRAYQ (69 aa)) is a DNA-binding region (HMG box). Ser160 is modified (phosphoserine). A coiled-coil region spans residues 190–257 (EEFLDQNKAR…LQQQLQAVRQ (68 aa)).

Component of a BHC histone deacetylase complex that contains HDAC1, HDAC2, HMG20B/BRAF35, KDM1A, RCOR1/CoREST and PHF21A/BHC80. The BHC complex may also contain ZMYM2, ZNF217, ZMYM3, GSE1 and GTF2I. Interacts with the BRCA2 tumor suppressor protein. Interacts with DTNB. In terms of tissue distribution, ubiquitously expressed in adult tissues.

Its subcellular location is the nucleus. It localises to the chromosome. Its function is as follows. Required for correct progression through G2 phase of the cell cycle and entry into mitosis. Required for RCOR1/CoREST mediated repression of neuronal specific gene promoters. The protein is SWI/SNF-related matrix-associated actin-dependent regulator of chromatin subfamily E member 1-related (HMG20B) of Homo sapiens (Human).